The following is a 307-amino-acid chain: Protein phosphatase PTC7 homolog fig (307 aa).

A PPM-type phosphatase domain is found at 41 to 300 (VQGSSKDQQL…DDITVILASV (260 aa)). Residues aspartate 77, glycine 78, and aspartate 222 each coordinate Mn(2+).

The protein belongs to the PP2C family. Requires Mg(2+) as cofactor. It depends on Mn(2+) as a cofactor.

It catalyses the reaction O-phospho-L-seryl-[protein] + H2O = L-seryl-[protein] + phosphate. The catalysed reaction is O-phospho-L-threonyl-[protein] + H2O = L-threonyl-[protein] + phosphate. The sequence is that of Protein phosphatase PTC7 homolog fig from Drosophila grimshawi (Hawaiian fruit fly).